The chain runs to 146 residues: Large ribosomal subunit protein uL15 (146 aa).

Over residues 1–13 the composition is skewed to basic and acidic residues; it reads MKLHELKPAEGSR. A disordered region spans residues 1 to 60; sequence MKLHELKPAEGSRKQRNRVGRGIGSGNGKTAGKGHKGQNARSGGGVRPGFEGGQNPLFRR. Composition is skewed to gly residues over residues 21–31 and 42–52; these read RGIGSGNGKTA and SGGGVRPGFEG.

The protein belongs to the universal ribosomal protein uL15 family. As to quaternary structure, part of the 50S ribosomal subunit.

In terms of biological role, binds to the 23S rRNA. This is Large ribosomal subunit protein uL15 from Lysinibacillus sphaericus (strain C3-41).